Consider the following 1021-residue polypeptide: Ankyrin repeat- and BTB/POZ domain-containing protein 3-A (1021 aa).

A helical transmembrane segment spans residues 160–180; sequence MVLSWTISVNCITAALSALSL. ANK repeat units lie at residues 515–544, 561–590, 599–628, and 642–671; these read QGMT…DINS, RQGT…NVEG, YTET…DPLI, and GEMN…KDKG. The BTB domain maps to 836-902; that stretch reads SDVTFLVEGK…LYCGGTESLH (67 aa).

Its subcellular location is the membrane. This Danio rerio (Zebrafish) protein is Ankyrin repeat- and BTB/POZ domain-containing protein 3-A (abtb3a).